We begin with the raw amino-acid sequence, 188 residues long: Respiratory supercomplex factor 1, mitochondrial (188 aa).

The region spanning 3-94 (DQADLLESPQ…TERKQRREFE (92 aa)) is the HIG1 domain. 2 helical membrane passes run 30–46 (PLIPLGCAATCYALYRA) and 66–83 (IYAQFFTLLAVVAGGMYY). Residues 83-119 (YKTERKQRREFERKVEERKAQEKRDAWLRELEAREKE) are a coiled coil. The tract at residues 147 to 171 (KKEEEEKGVDGNVNQAPQEEGGVKR) is disordered.

Belongs to the RCF1 family. In terms of assembly, associates with the respiratory chain complex III/complex IV supercomplex.

The protein resides in the mitochondrion membrane. In terms of biological role, cytochrome c oxidase subunit which plays a role in assembly of respiratory supercomplexes. This Talaromyces stipitatus (strain ATCC 10500 / CBS 375.48 / QM 6759 / NRRL 1006) (Penicillium stipitatum) protein is Respiratory supercomplex factor 1, mitochondrial (rcf1).